We begin with the raw amino-acid sequence, 404 residues long: Cysteine desulfurase IscS (404 aa).

Residues 75-76 (AT), N155, Q183, and 203-205 (SAH) each bind pyridoxal 5'-phosphate. K206 bears the N6-(pyridoxal phosphate)lysine mark. T243 serves as a coordination point for pyridoxal 5'-phosphate. The Cysteine persulfide intermediate role is filled by C328. [2Fe-2S] cluster is bound at residue C328.

The protein belongs to the class-V pyridoxal-phosphate-dependent aminotransferase family. NifS/IscS subfamily. Homodimer. Forms a heterotetramer with IscU, interacts with other sulfur acceptors. Pyridoxal 5'-phosphate serves as cofactor.

Its subcellular location is the cytoplasm. The enzyme catalyses (sulfur carrier)-H + L-cysteine = (sulfur carrier)-SH + L-alanine. The protein operates within cofactor biosynthesis; iron-sulfur cluster biosynthesis. Functionally, master enzyme that delivers sulfur to a number of partners involved in Fe-S cluster assembly, tRNA modification or cofactor biosynthesis. Catalyzes the removal of elemental sulfur atoms from cysteine to produce alanine. Functions as a sulfur delivery protein for Fe-S cluster synthesis onto IscU, an Fe-S scaffold assembly protein, as well as other S acceptor proteins. In Pseudomonas aeruginosa (strain LESB58), this protein is Cysteine desulfurase IscS.